A 501-amino-acid chain; its full sequence is Cytochrome P450 monooxygenase esdpH (501 aa).

The helical transmembrane segment at 5–22 (RVGILIIGVLATATFWLC) threads the bilayer. Residue C446 participates in heme binding.

The protein belongs to the cytochrome P450 family. Heme serves as cofactor.

It localises to the membrane. It participates in secondary metabolite biosynthesis; terpenoid biosynthesis. In terms of biological role, cytochrome P450 monooxygenase; part of the cluster that mediates the biosynthesis of shearones, diterpenoid pyrones (DPs) which are structurally diverse meroterpenoids consisting of a diterpene linked by a pyrone, and which may exhibit a range of bioactivities. Whitin the pathway, esdpH takes part in the molecular scaffold modification via the hydroxylation at C-6' and can transform shearone C into shearone E, shearone D into shearone F, and shearone H into shearone I, the latter being the final product of the pathway. The molecular scaffold is commonly biosynthesized by a series of enzymes including the non-reducing polyketide synthase (NR-PKS) esdpA that generates an alpha-pyrone; the prenyltransferase esdpC that attaches a geranylgeranyl pyrophosphate (GGPP) produced by the GGPP synthase (GGPPS) esdpD onto the pyrone unit; the FAD-dependent monooxygenase esdpE that converts an olefin on the diterpene unit into an epoxide; and the terpene cyclase esdpB that catalyzes the cyclization reactions to give the molecular backbone shearone A. In the modification steps, esdpF oxidizes the hydroxy group to a ketone at C-3 and esdpG then attaches hydroxy groups at both C-11 and C-12. After that, esdpI hydroxylates at C-20 and esdpH hydroxylates at C-6'. The ether bridge is generated by nucleophilic attack of the hydroxy group at C-20 to the carbonyl carbon at C-3. EsdpH can also functions prior to esdpI. The different combinations of these modification enzymes lead to the production of diverse shearone derivatives, shearone I being the end product of the pathway. The alpha-ketoglutarate-dependent dioxygenase esdpJ seems not to be involved in this pathway. This chain is Cytochrome P450 monooxygenase esdpH, found in Penicillium shearii (Eupenicillium shearii).